The sequence spans 296 residues: MIKKTTEIDAILLNLNKAIDAHYQWLVSMFHSVVARDASKPEITDNHSYGLCQFGRWIDHLGPLDNDELPYVRLMDSAHQHMHNCGRELMLAIVENHWQDAHFDAFQEGLLSFTAALTDYKIYLLTIRSNMDVLTGLPGRRVLDESFDHQLRNAEPLNLYLMLLDIDRFKLVNDTYGHLIGDVVLRTLATYLASWTRDYETVYRYGGEEFIIIVKAANDEEACRAGVRICQLVDNHAITHSEGHINITVTAGVSRAFPEEPLDVVIGRADRAMYEGKQTGRNRCMFIDEQNVINRV.

H22, C52, H79, and H83 together coordinate Zn(2+). Positions 157-289 (LNLYLMLLDI…GRNRCMFIDE (133 aa)) constitute a GGDEF domain. Mg(2+)-binding residues include D165 and I166. Residues N173, H178, D182, and 195-200 (WTRDYE) each bind substrate. E208 serves as a coordination point for Mg(2+). E208 acts as the Proton acceptor in catalysis. Substrate contacts are provided by K215, R224, and R228.

As to quaternary structure, homodimer. It depends on Mg(2+) as a cofactor.

It carries out the reaction 2 GTP = 3',3'-c-di-GMP + 2 diphosphate. It functions in the pathway purine metabolism; 3',5'-cyclic di-GMP biosynthesis. With respect to regulation, allosterically regulated by zinc, which seems to regulate the activity of the catalytic GGDEF domains by impeding their mobility and thus preventing productive encounter of the two GTP substrates. Subject to product inhibition by c-di-GMP at a KI of 44 uM. In terms of biological role, catalyzes the synthesis of cyclic-di-GMP (c-di-GMP) via the condensation of 2 GTP molecules. May act as a zinc sensor that controls, via c-di-GMP, post-translational events. Overexpression leads to a strong repression of swimming; swimming returnes to normal when residues 206-207 are both mutated to Ala. Overexpression also leads to a reduction in flagellar abundance and a 20-fold increase in c-di-GMP levels in vivo. Required for aminoglycoside-mediated induction of biofilm formation, it also plays a lesser role in biofilm production in response to other classes of translation inhibitors. The c-di-GMP produced by this enzyme up-regulates poly-GlcNAc production as well as the biofilm synthesis protein PgaD, although c-di-GMP is probably not the main inducing principle. C-di-GMP is a second messenger which controls cell surface-associated traits in bacteria. The chain is Diguanylate cyclase DgcZ from Escherichia coli (strain K12).